A 587-amino-acid chain; its full sequence is Putative gustatory receptor 59b (587 aa).

Residues 1–4 are Cytoplasmic-facing; it reads MPSY. A helical transmembrane segment spans residues 5–25; the sequence is MAFTPYIMFSTNYAAIAYILI. Topologically, residues 26-62 are extracellular; the sequence is SRCYRDSMLLDLQRITLEVNREMLRTGKKMNSLIRRM. A helical transmembrane segment spans residues 63–83; that stretch reads FFLKTFTLTYSCLSYILAVLV. The Cytoplasmic portion of the chain corresponds to 84–97; sequence YQWRAQNWSNLFNG. A helical membrane pass occupies residues 98–118; sequence LLVNISLTILVVTTFFYFVSL. Topologically, residues 119–277 are extracellular; sequence MHVARGFDFV…CGLYPVNKAK (159 aa). The N-linked (GlcNAc...) asparagine glycan is linked to Asn-159. Residues 278–298 traverse the membrane as a helical segment; the sequence is WLEMVASIVVHSIMLFQFHLV. Residues 299–309 are Cytoplasmic-facing; sequence MRGGYTTLFSR. The chain crosses the membrane as a helical span at residues 310–330; it reads TYALLANIITLTMLPIVMWQV. The Extracellular segment spans residues 331 to 403; it reads RSVFLAKRHY…GIDGVRRSLR (73 aa). The chain crosses the membrane as a helical span at residues 404–424; it reads ILLFVKFFTLSWLCITDIIFL. Residues 425 to 518 are Cytoplasmic-facing; it reads FYSSDAVIWV…IYAPQMLATR (94 aa). The helical transmembrane segment at 519–539 threads the bilayer; sequence FDHFVIGVIQAYWGAVFTFDL. Over 540-587 the chain is Extracellular; that stretch reads STSFLWVVYGSVQYHVRSLDYYLIDYMCDVAVEYHDSARHSWSEKECY.

Belongs to the insect chemoreceptor superfamily. Gustatory receptor (GR) family. Gr22e subfamily.

It is found in the cell membrane. Probable gustatory receptor which mediates acceptance or avoidance behavior, depending on its substrates. The sequence is that of Putative gustatory receptor 59b from Drosophila erecta (Fruit fly).